Here is a 360-residue protein sequence, read N- to C-terminus: POU domain, class 5, transcription factor 1 (360 aa).

Disordered regions lie at residues 1–48 and 86–137; these read MAGH…SGIG and PPGG…EESQ. Residues 4–12 carry the 9aaTAD motif; the sequence is HLASDFAFS. Position 111 is a phosphoserine; by MAPK (serine 111). A Glycyl lysine isopeptide (Lys-Gly) (interchain with G-Cter in SUMO) cross-link involves residue lysine 123. Residues 123–137 are compositionally biased toward basic and acidic residues; the sequence is KLDKEKLEPNPEESQ. The POU-specific domain occupies 138–212; the sequence is DIKALQKDLE…LLQKWVEEAD (75 aa). DNA-binding residues include arginine 157 and glutamine 164. DNA-binding regions lie at residues 180 to 186 and 193 to 196; these read SQTTICR and SFKN. The homeobox DNA-binding region spans 230–289; the sequence is RKRKRTSIENRVRGNLESMFLQCPKPTLQQISHIAQQLGLEKDVVRVWFCNRRQKGKRSS. Residue threonine 235 is modified to Phosphothreonine. A phosphoserine mark is found at serine 236, serine 289, serine 290, and serine 355. The interval 287–322 is disordered; the sequence is RSSSDYSQREDFEAAGSPFTGGPVSSPLAPGPHFGT.

Belongs to the POU transcription factor family. Class-5 subfamily. In terms of assembly, interacts with PKM. Interacts with WWP2. Interacts with UBE2I and ZSCAN10. Interacts with PCGF1. Interacts with ESRRB; recruits ESRRB near the POU5F1-SOX2 element in the NANOG proximal promoter; the interaction is DNA independent. Interacts with MAPK8 and MAPK9; the interaction allows MAPK8 and MAPK9 to phosphorylate POU5F1 on Ser-355. Interacts (when phosphorylated on Ser-355) with FBXW8. Interacts with FBXW4. Interacts with SOX2 and SOX15; binds synergistically with either SOX2 or SOX15 to DNA. Interacts with DDX56. In terms of processing, sumoylation enhances the protein stability, DNA binding and transactivation activity. Sumoylation is required for enhanced YES1 expression. Post-translationally, ubiquitinated; undergoes 'Lys-63'-linked polyubiquitination by WWP2 leading to proteasomal degradation. ERK1/2-mediated phosphorylation at Ser-111 promotes nuclear exclusion and proteasomal degradation. Phosphorylation at Thr-235 and Ser-236 decrease DNA-binding and alters ability to activate transcription. As to expression, expressed in immature oocytes.

Its subcellular location is the cytoplasm. The protein resides in the nucleus. Transcription factor that binds to the octamer motif (5'-ATTTGCAT-3'). Forms a trimeric complex with SOX2 or SOX15 on DNA and controls the expression of a number of genes involved in embryonic development such as YES1, FGF4, UTF1 and ZFP206. Critical for early embryogenesis and for embryonic stem cell pluripotency. In Bos taurus (Bovine), this protein is POU domain, class 5, transcription factor 1 (POU5F1).